The following is a 209-amino-acid chain: Protease (209 aa).

Residues His55, Asp72, and Cys123 contribute to the active site.

The protein belongs to the peptidase C5 family. As to quaternary structure, interacts with protease cofactor pVI-C; this interaction is necessary for protease activation.

The protein localises to the virion. It is found in the host nucleus. It carries out the reaction Cleaves proteins of the adenovirus and its host cell at two consensus sites: -Yaa-Xaa-Gly-Gly-|-Xaa- and -Yaa-Xaa-Gly-Xaa-|-Gly- (in which Yaa is Met, Ile or Leu, and Xaa is any amino acid).. Requires DNA and protease cofactor for maximal activation. Inside nascent virions, becomes partially activated by binding to the viral DNA, allowing it to cleave the cofactor that binds to the protease and fully activates it. Actin, like the viral protease cofactor, seems to act as a cofactor in the cleavage of cytokeratin 18 and of actin itself. Cleaves viral precursor proteins (pTP, pIIIa, pVI, pVII, pVIII, and pX) inside newly assembled particles giving rise to mature virions. Protease complexed to its cofactor slides along the viral DNA to specifically locate and cleave the viral precursors. Mature virions have a weakened organization compared to the unmature virions, thereby facilitating subsequent uncoating. Without maturation, the particle lacks infectivity and is unable to uncoat. Late in adenovirus infection, in the cytoplasm, may participate in the cytoskeleton destruction. Cleaves host cell cytoskeletal keratins K7 and K18. In Human adenovirus D serotype 9 (HAdV-9), this protein is Protease.